The sequence spans 1093 residues: Mediator of RNA polymerase II transcription subunit 14 (1093 aa).

Disordered regions lie at residues 1–62 (MPGV…IDGH) and 1034–1065 (ETKS…ANDT). Positions 19–31 (DTQTPSNGDNLRN) are enriched in polar residues. Residues 41 to 62 (KGDKDHDPDKESYAGKPRIDGH) show a composition bias toward basic and acidic residues. Polar residues predominate over residues 1040 to 1056 (DYSTQPAPENQSQTGAP).

The protein belongs to the Mediator complex subunit 14 family. In terms of assembly, component of the Mediator complex.

It localises to the nucleus. In terms of biological role, component of the Mediator complex, a coactivator involved in the regulated transcription of nearly all RNA polymerase II-dependent genes. Mediator functions as a bridge to convey information from gene-specific regulatory proteins to the basal RNA polymerase II transcription machinery. Mediator is recruited to promoters by direct interactions with regulatory proteins and serves as a scaffold for the assembly of a functional preinitiation complex with RNA polymerase II and the general transcription factors. This chain is Mediator of RNA polymerase II transcription subunit 14 (rgr1), found in Aspergillus fumigatus (strain ATCC MYA-4609 / CBS 101355 / FGSC A1100 / Af293) (Neosartorya fumigata).